The chain runs to 67 residues: uncharacterized protein (67 aa).

This is an uncharacterized protein from Saccharolobus islandicus (Sulfolobus islandicus).